We begin with the raw amino-acid sequence, 722 residues long: Delta-like protein 1 (722 aa).

An N-terminal signal peptide occupies residues 1–17; sequence MGRRSALALAVVSALLC. Residues 18–545 are Extracellular-facing; sequence QVWSSGVFEL…MESQGGPFPW (528 aa). The 45-residue stretch at 176–220 folds into the DSL domain; it reads FVCDEHYYGEGCSVFCRPRDDAFGHFTCGDRGEKMCDPGWKGQYC. 27 cysteine pairs are disulfide-bonded: Cys178–Cys187, Cys191–Cys203, Cys211–Cys220, Cys225–Cys236, Cys229–Cys242, Cys244–Cys253, Cys256–Cys267, Cys262–Cys273, Cys275–Cys284, Cys291–Cys303, Cys297–Cys313, Cys315–Cys324, Cys331–Cys342, Cys336–Cys351, Cys353–Cys362, Cys369–Cys380, Cys374–Cys390, Cys392–Cys401, Cys408–Cys419, Cys413–Cys428, Cys430–Cys439, Cys446–Cys457, Cys451–Cys466, Cys468–Cys477, Cys484–Cys495, Cys489–Cys504, and Cys506–Cys515. 3 consecutive EGF-like domains span residues 225–253, 256–284, and 291–324; these read CLPG…GRYC, CIRY…GLFC, and CTHH…GANC. Residues 331–362 enclose the EGF-like 4; calcium-binding domain; sequence CAPSPCKNGASCTDLEDSFSCTCPPGFYGKVC. 2 EGF-like domains span residues 369 to 401 and 408 to 439; these read CADG…GFNC and CGSS…GRYC. The EGF-like 7; calcium-binding domain maps to 446–477; sequence CASSPCANGGTCRDSVNDFSCTCPPGYTGKNC. Asn476 carries N-linked (GlcNAc...) asparagine glycosylation. The EGF-like 8 domain maps to 484-515; that stretch reads CEHAPCHNGATCHQRGQRYMCECAQGYGGPNC. A helical membrane pass occupies residues 546–568; the sequence is VAVCAGVVLVLLLLLGCAAVVVC. Topologically, residues 569 to 722 are cytoplasmic; sequence VRLKLQKHQP…KDECVIATEV (154 aa). Residue Lys613 forms a Glycyl lysine isopeptide (Lys-Gly) (interchain with G-Cter in ubiquitin) linkage. Thr638 carries the phosphothreonine modification. Residues 655–664 show a composition bias toward basic and acidic residues; it reads RDTHSKRDTK. Residues 655–697 are disordered; the sequence is RDTHSKRDTKCQSQSSAGEEKIAPTLRGGEIPDRKRPESVYST. Ser693 is modified (phosphoserine; by PKB). Ser696 bears the Phosphoserine mark. Positions 719–722 are interaction with MAGI1; the sequence is ATEV.

As to quaternary structure, homodimer. Interacts with TJP1. Interacts with MMP14; inhibits DLL1-induced Notch signaling. Interacts with MAGI1 (via PDZ domain); forms a complex with CTNNB1 and CDH2 and promotes recruitment to the adherens junction and stabilization on the cell surface. Interacts with PSEN1; undergoes a presenilin-dependent gamma-secretase cleavage that releases a Dll1-intracellular form. Interacts with MFAP5. Interacts with MIB1. Interacts with NEURL1B; leads to ubiquitination. Interacts with NEURL1. Interacts with SYNJ2BP; enhances DLL1 protein stability, and promotes Notch signaling in endothelial cells. Interacts with MAGI1, MAGI2, MAGI3 and MPDZ. Interacts (via ubiquitin) with EPN1 (via IUM domain); binding with NOTCH1 attached to neighboring cell, promotes ligand ubiquitination and EPN1 interaction, leading to NECD transendocytosis and Notch signaling. Interacts with NOTCH1. In terms of processing, ubiquitinated by MIB (MIB1 or MIB2), leading to its endocytosis and subsequent degradation. Ubiquitinated; promotes recycling back to the plasma membrane and confers a strong affinity for NOTCH1. Multi-ubiquitination of Lys-613 by MIB1 promotes both cis and trans-interaction with NOTCH1, as well as activation of Notch signaling. Ubiquitinated by NEURL1B. Phosphorylated in a membrane association-dependent manner. Phosphorylation at Ser-696 requires the presence of Ser-693, whereas phosphorylation at Thr-638 and Ser-693 occurs independently of the other sites. Phosphorylation is required for full ligand activity in vitro and affects surface presentation, ectodomain shedding, and endocytosis. Post-translationally, cleaved by MMP14; negatively regulates DLL1-induced Notch signaling in HPCs, modulating B-lymphocyte differentiation in bone marrow. Undergoes two consecutive processing events: a shedding event, partially by ADAM10, that generates a soluble extracellular form and an intracellular membrane-anchored form, followed by a gamma-secretase cleavage releasing an intracellular fragment. In terms of processing, O-fucosylated. Can be elongated to a disaccharide by MFNG. In terms of tissue distribution, in the embryo, expressed in the paraxial mesoderm and nervous system. Expressed at high levels in adult heart and at lower levels, in adult lung. Highly expressed in satellite cells from masseter and tongue than in satellite cells from leg and extraocular muscle.?.

Its subcellular location is the apical cell membrane. The protein resides in the cell junction. It localises to the adherens junction. The protein localises to the membrane raft. It is found in the cell membrane. Its subcellular location is the nucleus. Functionally, transmembrane ligand protein of NOTCH1, NOTCH2 and NOTCH3 receptors that binds the extracellular domain (ECD) of Notch receptor in a cis and trans fashion manner. Following transinteraction, ligand cells produce mechanical force that depends of a clathrin-mediated endocytosis, requiring ligand ubiquitination, EPN1 interaction, and actin polymerisation; these events promote Notch receptor extracellular domain (NECD) transendocytosis and triggers Notch signaling through induction of cleavage, hyperphosphorylation, and nuclear accumulation of the intracellular domain of Notch receptors (NICD). Is required for embryonic development and maintenance of adult stem cells in many different tissues and immune systeme; the DLL1-induced Notch signaling is mediated through an intercellular communication that regulates cell lineage, cell specification, cell patterning and morphogenesis through effects on differentiation and proliferation. Plays a role in brain development at different level, namely by regulating neuronal differentiation of neural precursor cells via cell-cell interaction, most likely through the lateral inhibitory system in an endogenous level dependent-manner. During neocortex development, Dll1-Notch signaling transmission is mediated by dynamic interactions between intermediate neurogenic progenitors and radial glia; the cell-cell interactions are mediated via dynamic and transient elongation processes, likely to reactivate/maintain Notch activity in neighboring progenitors, and coordinate progenitor cell division and differentiation across radial and zonal boundaries. During cerebellar development, regulates Bergmann glial monolayer formation and its morphological maturation through a Notch signaling pathway. At the retina and spinal cord level, regulates neurogenesis by preventing the premature differentiation of neural progenitors and also by maintaining progenitors in spinal cord through Notch signaling pathway. Also controls neurogenesis of the neural tube in a progenitor domain-specific fashion along the dorsoventral axis. Maintains quiescence of neural stem cells and plays a role as a fate determinant that segregates asymmetrically to one daughter cell during neural stem cells mitosis, resulting in neuronal differentiation in Dll1-inheriting cell. Plays a role in immune systeme development, namely the development of all T-cells and marginal zone (MZ) B cells. Blocks the differentiation of progenitor cells into the B-cell lineage while promoting the emergence of a population of cells with the characteristics of a T-cell/NK-cell precursor. Upon MMP14 cleavage, negatively regulates Notch signaling in haematopoietic progenitor cells to specifically maintain normal B-cell development in bone marrow. Also plays a role during muscle development. During early development, inhibits myoblasts differentiation from the medial dermomyotomal lip and later regulates progenitor cell differentiation. Directly modulates cell adhesion and basal lamina formation in satellite cells through Notch signaling. Maintains myogenic progenitors pool by suppressing differentiation through down-regulation of MYOD1 and is required for satellite cell homing and PAX7 expression. During craniofacial and trunk myogenesis suppresses differentiation of cranial mesoderm-derived and somite-derived muscle via MYOD1 regulation but in cranial mesoderm-derived progenitors, is neither required for satellite cell homing nor for PAX7 expression. Also plays a role during pancreatic cell development. During type B pancreatic cell development, may be involved in the initiation of proximodistal patterning in the early pancreatic epithelium. Stimulates multipotent pancreatic progenitor cells proliferation and pancreatic growth by maintaining HES1 expression and PTF1A protein levels. During fetal stages of development, is required to maintain arterial identity and the responsiveness of arterial endothelial cells for VEGFA through regulation of KDR activation and NRP1 expression. Controls sprouting angiogenesis and subsequent vertical branch formation through regulation on tip cell differentiation. Negatively regulates goblet cell differentiation in intestine and controls secretory fat commitment through lateral inhibition in small intestine. Plays a role during inner ear development; negatively regulates auditory hair cell differentiation. Plays a role during nephron development through Notch signaling pathway. Regulates growth, blood pressure and energy homeostasis. This chain is Delta-like protein 1 (Dll1), found in Mus musculus (Mouse).